The chain runs to 404 residues: Coenzyme F420H(2) oxidase (404 aa).

Fe cation is bound by residues His-83, Glu-85, Asp-87, His-88, His-151, Asp-170, and His-233. Residues 259–399 form the Flavodoxin-like domain; that stretch reads VTVIYDTMHG…ACFEAGRKLA (141 aa). Residues 265–270, 317–320, and 351–356 contribute to the FMN site; these read TMHGST, TIYD, and SMGGNG.

In the N-terminal section; belongs to the zinc metallo-hydrolase group 3 family. Homodimer. Homotetramer. The tetramer is composed of two functional dimers. The cofactor is FMN. Fe cation is required as a cofactor.

It catalyses the reaction 2 reduced coenzyme F420-(gamma-L-Glu)(n) + O2 = 2 oxidized coenzyme F420-(gamma-L-Glu)(n) + 2 H2O + 2 H(+). Its function is as follows. Catalyzes the oxidation of F420H(2) with O(2). May be involved in O(2) detoxification, reducing the intracellular O(2) concentration to a level allowing growth at the expense of methane formation. This is Coenzyme F420H(2) oxidase from Methanothermobacter marburgensis (strain ATCC BAA-927 / DSM 2133 / JCM 14651 / NBRC 100331 / OCM 82 / Marburg) (Methanobacterium thermoautotrophicum).